The following is a 238-amino-acid chain: Ribosomal RNA small subunit methyltransferase G (238 aa).

Residues G77, F82, 128–129 (AE), and R147 each bind S-adenosyl-L-methionine. The tract at residues 219–238 (RQTPKKYPRKAGLPNKEPIE) is disordered.

This sequence belongs to the methyltransferase superfamily. RNA methyltransferase RsmG family.

The protein resides in the cytoplasm. Functionally, specifically methylates the N7 position of guanine in position 535 of 16S rRNA. This is Ribosomal RNA small subunit methyltransferase G from Oceanobacillus iheyensis (strain DSM 14371 / CIP 107618 / JCM 11309 / KCTC 3954 / HTE831).